The sequence spans 46 residues: DENENLYGPNENKAKAKDLTAGASYLTKEAGCTKLQAGCTMYQAYN.

Its subcellular location is the secreted. It localises to the nematocyst. The protein localises to the target cell membrane. In terms of biological role, this toxin is a potent hemolysin devoid of enzymatic activity. Its hemolytic activity is inhibited by sphingomyelin but not by cholesterol. In erythrocyte membranes, it causes numerous cell membrane ruptures. It also exerces cytotoxicity to different cell lines. It exerces a positive inotropic effect. Also causes hemorrhage and necrosis by dilation of the blood vessels in the skin, and vascular leakage of fluids and rupture of alveolar walls of the lungs. Is a potent ichtyotoxin. May act as a pore-forming toxin. The protein is Toxin Up-1 of Urticina piscivora (Fish-eating sea anemone).